The chain runs to 241 residues: Ribonuclease HII (241 aa).

The region spanning Gly27–Asp227 is the RNase H type-2 domain. Residues Asp33, Glu34, and Asp128 each contribute to the a divalent metal cation site.

The protein belongs to the RNase HII family. The cofactor is Mn(2+). Mg(2+) serves as cofactor.

It localises to the cytoplasm. The catalysed reaction is Endonucleolytic cleavage to 5'-phosphomonoester.. Endonuclease that specifically degrades the RNA of RNA-DNA hybrids. The sequence is that of Ribonuclease HII from Frankia alni (strain DSM 45986 / CECT 9034 / ACN14a).